Reading from the N-terminus, the 138-residue chain is Large ribosomal subunit protein bL19 (138 aa).

Belongs to the bacterial ribosomal protein bL19 family.

In terms of biological role, this protein is located at the 30S-50S ribosomal subunit interface and may play a role in the structure and function of the aminoacyl-tRNA binding site. This Rickettsia peacockii (strain Rustic) protein is Large ribosomal subunit protein bL19.